Consider the following 211-residue polypeptide: Glycerol-3-phosphate acyltransferase (211 aa).

6 helical membrane-spanning segments follow: residues 10-30 (FYTWSIFLMSYLIGSIPFGLL), 63-83 (TLTLLCDILKGTVVVLVIKFL), 90-110 (SIIISLVGFFAFLGHLFPIWL), 126-146 (LGYYWPAAIVFIIVWIMFFIL), 152-172 (LSALIAVIITPIFVYFSYPHL), and 174-194 (AHCILVMMSIFVIIKHHANIA).

The protein belongs to the PlsY family. In terms of assembly, probably interacts with PlsX.

Its subcellular location is the cell inner membrane. The catalysed reaction is an acyl phosphate + sn-glycerol 3-phosphate = a 1-acyl-sn-glycero-3-phosphate + phosphate. It participates in lipid metabolism; phospholipid metabolism. Its function is as follows. Catalyzes the transfer of an acyl group from acyl-phosphate (acyl-PO(4)) to glycerol-3-phosphate (G3P) to form lysophosphatidic acid (LPA). This enzyme utilizes acyl-phosphate as fatty acyl donor, but not acyl-CoA or acyl-ACP. This chain is Glycerol-3-phosphate acyltransferase, found in Bartonella quintana (strain Toulouse) (Rochalimaea quintana).